A 293-amino-acid chain; its full sequence is Ribosomal protein L11 methyltransferase (293 aa).

Residues Thr-145, Gly-166, Asp-188, and Asn-230 each contribute to the S-adenosyl-L-methionine site.

This sequence belongs to the methyltransferase superfamily. PrmA family.

It localises to the cytoplasm. It carries out the reaction L-lysyl-[protein] + 3 S-adenosyl-L-methionine = N(6),N(6),N(6)-trimethyl-L-lysyl-[protein] + 3 S-adenosyl-L-homocysteine + 3 H(+). Its function is as follows. Methylates ribosomal protein L11. The chain is Ribosomal protein L11 methyltransferase from Shewanella baltica (strain OS155 / ATCC BAA-1091).